A 303-amino-acid polypeptide reads, in one-letter code: Heme A synthase (303 aa).

Over 1 to 8 (MFGKKNLK) the chain is Cytoplasmic. A helical membrane pass occupies residues 9-29 (WLGVVATLMMTFVQLGGALVT). Topologically, residues 30–67 (KTGSADGCGSSWPLCHGALIPEFFPIDTIIELSHRAVS) are extracellular. The cysteines at positions 37 and 44 are disulfide-linked. Glutamate 60 is a catalytic residue. Histidine 63 contacts heme o. A helical membrane pass occupies residues 68–88 (ALSLLMVLWLVITAWKHIGYI). Over 89 to 93 (KEIKP) the chain is Cytoplasmic. Residues 94-114 (LSIISVGFLLLQALIGAAAVI) form a helical membrane-spanning segment. Over 115-125 (WQQNDYVLALH) the chain is Extracellular. Histidine 125 contributes to the heme o binding site. The helical transmembrane segment at 126-146 (FGISLISFSSVFLITLIIFSI) threads the bilayer. At 147-163 (DQKYEADELYIKKPLRR) the chain is on the cytoplasmic side. The chain crosses the membrane as a helical span at residues 164–184 (LTWLMAIIIYCGVYTGALVRH). Over 185–215 (ADASLAYGGWPLPFHDLVPHSEQDWVQLTHR) the chain is Extracellular. Histidine 214 serves as a coordination point for heme b. Residues 216–236 (IMAFIVFTIIMITYIHAVKNY) traverse the membrane as a helical segment. Over 237 to 244 (PNNRTVHY) the chain is Cytoplasmic. A helical membrane pass occupies residues 245 to 265 (GYTAAFILVILQVITGALSIM). Residues 266–270 (TNVNL) lie on the Extracellular side of the membrane. The chain crosses the membrane as a helical span at residues 271-291 (LIALFHALFITYLFGMTTYFI). Histidine 276 serves as a coordination point for heme b. The Cytoplasmic portion of the chain corresponds to 292 to 303 (MLMLRSVRSDKQ).

It belongs to the COX15/CtaA family. Type 1 subfamily. As to quaternary structure, interacts with CtaB. It depends on heme b as a cofactor.

It localises to the cell membrane. It catalyses the reaction Fe(II)-heme o + 2 A + H2O = Fe(II)-heme a + 2 AH2. It participates in porphyrin-containing compound metabolism; heme A biosynthesis; heme A from heme O: step 1/1. Functionally, catalyzes the conversion of heme O to heme A by two successive hydroxylations of the methyl group at C8. The first hydroxylation forms heme I, the second hydroxylation results in an unstable dihydroxymethyl group, which spontaneously dehydrates, resulting in the formyl group of heme A. In Staphylococcus aureus (strain MSSA476), this protein is Heme A synthase.